The following is a 128-amino-acid chain: Sulfurtransferase TusD (128 aa).

Cys-78 serves as the catalytic Cysteine persulfide intermediate.

This sequence belongs to the DsrE/TusD family. As to quaternary structure, heterohexamer, formed by a dimer of trimers. The hexameric TusBCD complex contains 2 copies each of TusB, TusC and TusD. The TusBCD complex interacts with TusE.

The protein localises to the cytoplasm. In terms of biological role, part of a sulfur-relay system required for 2-thiolation of 5-methylaminomethyl-2-thiouridine (mnm(5)s(2)U) at tRNA wobble positions. Accepts sulfur from TusA and transfers it in turn to TusE. The polypeptide is Sulfurtransferase TusD (Citrobacter koseri (strain ATCC BAA-895 / CDC 4225-83 / SGSC4696)).